A 1186-amino-acid chain; its full sequence is Cytotoxicity-associated immunodominant antigen (1186 aa).

The segment covering 630–649 has biased composition (basic and acidic residues); that stretch reads EKEVEKKLESKSGNKNKMEA. Positions 630–652 are disordered; sequence EKEVEKKLESKSGNKNKMEAKAQ.

Functionally, may be necessary for the transcription, folding, export, or function of the cytotoxin. In Helicobacter pylori (strain ATCC 700392 / 26695) (Campylobacter pylori), this protein is Cytotoxicity-associated immunodominant antigen (cagA).